The primary structure comprises 503 residues: MLKRFVNSIWEICQKDKFQRFTPVADAIDTFCYEPIHQPSSPPFIRDAVDVKRWMMLVVIALFPATFLAIWNSGVQALVYGSGNAQLMESFLHISGFRSYLSFIFNDIGVFSILWTGCKIFLPLLIISYSVGGVCEVLFAIVRKHKIAEGLLVTGILYPLTLPPTIPYWMAALGIAFGVVVSKELFGGTGMNILNPALSGRAFLFFTFPAKMSGDVWVGSNPTKIKESLLAMNSTAGKSIIDGFSQSTCLQTLNSTAPAVKRVHVDAIASNILQMPHVPTESVIHSQFSIWAESHPGLMLDKLTLEQLQNFVTSPLSEGGLGLLPTQFDSAYSITDVIYGIGKFSSGNLFWGNIIGSLGETSTFACLLGAIFLVVTGIASWRTMVSFGIGAFITAWLFKIFSILIVGKHGAWAPARFFIPAYRQLFLGGLGFGLVFMATDPVSSPTMKLAKWIYGLFIGFMTIVIRLINPAYPEGVMLAILLGNVFAPLLDYFAVRKYRRRRI.

A run of 5 helical transmembrane segments spans residues Met55–Val75, Ile94–Leu114, Ile120–Ala140, Thr161–Val181, and Phe186–Phe206. Thr248 carries the FMN phosphoryl threonine modification. 5 helical membrane passes run Thr361–Trp381, Phe387–Gly407, Phe417–Met437, Trp452–Tyr472, and Gly475–Val495.

It belongs to the NqrB/RnfD family. As to quaternary structure, composed of six subunits; NqrA, NqrB, NqrC, NqrD, NqrE and NqrF. Requires FMN as cofactor.

Its subcellular location is the cell inner membrane. It catalyses the reaction a ubiquinone + n Na(+)(in) + NADH + H(+) = a ubiquinol + n Na(+)(out) + NAD(+). Functionally, NQR complex catalyzes the reduction of ubiquinone-1 to ubiquinol by two successive reactions, coupled with the transport of Na(+) ions from the cytoplasm to the periplasm. NqrA to NqrE are probably involved in the second step, the conversion of ubisemiquinone to ubiquinol. In Chlamydia caviae (strain ATCC VR-813 / DSM 19441 / 03DC25 / GPIC) (Chlamydophila caviae), this protein is Na(+)-translocating NADH-quinone reductase subunit B.